The following is a 3564-amino-acid chain: Sushi, von Willebrand factor type A, EGF and pentraxin domain-containing protein 1 (3564 aa).

Residues 1-17 (MWTRLAFCCWALALVSG) form the signal peptide. A VWFA domain is found at 84 to 265 (ELVFLVDESS…LARRALHEDL (182 aa)). Asn-187 carries N-linked (GlcNAc...) asparagine glycosylation. Sushi domains follow at residues 377-436 (VHCP…FCRV), 437-496 (RTCP…RCVE), and 497-561 (RHCA…VCKD). Cystine bridges form between Cys-379-Cys-421, Cys-407-Cys-434, Cys-439-Cys-481, Cys-467-Cys-494, Cys-499-Cys-544, and Cys-530-Cys-559. HYR domains follow at residues 560–644 (KDVE…KVID) and 645–724 (VEPP…VIKG). Residues 725–789 (SPCEVPFTPV…YSTEWPDCAI (65 aa)) enclose the Sushi 4 domain. Cystine bridges form between Cys-727-Cys-769, Cys-753-Cys-787, Cys-1192-Cys-1203, Cys-1197-Cys-1212, Cys-1214-Cys-1223, Cys-1230-Cys-1241, Cys-1235-Cys-1250, Cys-1252-Cys-1261, Cys-1268-Cys-1279, Cys-1273-Cys-1288, Cys-1290-Cys-1299, Cys-1306-Cys-1317, Cys-1311-Cys-1326, Cys-1328-Cys-1337, Cys-1344-Cys-1355, Cys-1349-Cys-1364, Cys-1366-Cys-1375, Cys-1382-Cys-1393, Cys-1387-Cys-1402, and Cys-1404-Cys-1413. The 37-residue stretch at 1188 to 1224 (VFHECFLNPCHNSGTCQQLGRGYVCLCPPGYTGLKCE) folds into the EGF-like 1 domain. The 37-residue stretch at 1226 to 1262 (DIDECSSLPCLNGGICRDKVGGFTCECSSGYTGQICE) folds into the EGF-like 2; calcium-binding domain. Residues 1264–1300 (NINECSSSPCLNKGTCTDGLASYRCTCVSGYVGVHCE) form the EGF-like 3; calcium-binding domain. Positions 1302–1338 (DVNECQSSPCLNNAVCKDQVGGFSCKCPPGFLGTRCE) constitute an EGF-like 4; calcium-binding domain. The EGF-like 5; calcium-binding domain maps to 1340 to 1376 (NVDECLSQPCQNGATCKDGANSFRCQCPAGFTGPHCE). The region spanning 1378–1414 (NINECQSNPCRNQATCVDELNSYSCKCRPGFSGRRCE) is the EGF-like 6; calcium-binding domain. The 205-residue stretch at 1419–1623 (SGFNLDFEVS…VKVDSSSIFC (205 aa)) folds into the Pentraxin (PTX) domain. 2 Sushi domains span residues 1624–1682 (SDCP…HCER) and 1683–1740 (IRCG…SCLD). 35 disulfide bridges follow: Cys-1626/Cys-1667, Cys-1653/Cys-1680, Cys-1685/Cys-1725, Cys-1711/Cys-1738, Cys-1744/Cys-1756, Cys-1750/Cys-1765, Cys-1767/Cys-1778, Cys-1784/Cys-1824, Cys-1810/Cys-1837, Cys-1842/Cys-1882, Cys-1868/Cys-1895, Cys-1900/Cys-1940, Cys-1926/Cys-1953, Cys-1958/Cys-1998, Cys-1984/Cys-2011, Cys-2016/Cys-2056, Cys-2042/Cys-2073, Cys-2078/Cys-2121, Cys-2107/Cys-2136, Cys-2141/Cys-2181, Cys-2167/Cys-2194, Cys-2199/Cys-2240, Cys-2226/Cys-2254, Cys-2259/Cys-2299, Cys-2285/Cys-2313, Cys-2318/Cys-2358, Cys-2344/Cys-2371, Cys-2376/Cys-2417, Cys-2403/Cys-2430, Cys-2435/Cys-2475, Cys-2461/Cys-2488, Cys-2493/Cys-2533, Cys-2519/Cys-2546, Cys-2551/Cys-2591, and Cys-2577/Cys-2603. The EGF-like 7; calcium-binding domain occupies 1740–1779 (DVDECAVGSDCSEHASCLNTNGSYICSCKPPYTGDGKNCA). An N-linked (GlcNAc...) asparagine glycan is attached at Asn-1760. 14 Sushi domains span residues 1776–1839 (KNCA…SCEA), 1840–1897 (ISCG…VCEL), 1898–1955 (VKCS…SCQL), 1956–2013 (VSCG…QCLA), 2014–2075 (VSCD…RCIA), 2076–2138 (HFCE…QCIP), 2139–2196 (VRCG…TCHP), 2197–2256 (VSCN…SCTP), 2257–2315 (LNCG…KCVP), 2316–2373 (TKCA…VCKL), 2374–2432 (VLCQ…ECVP), 2433–2490 (VECP…MCRP), 2491–2548 (IECP…SCNA), and 2549–2605 (IHCS…TCVP). The important for the interaction with integrin ITGA9:ITGB1 stretch occupies residues 2634 to 2641 (DMMEVPYL). 14 consecutive Sushi domains span residues 2659–2708 (EESL…SCIS), 2709–2766 (IECD…RCEV), 2767–2824 (ISCS…VCLP), 2825–2882 (VDCG…SCVP), 2883–2940 (VRCP…ICKP), 2941–2998 (ATCG…SCLP), 2999–3054 (CTCS…LCEH), 3055–3112 (ADCG…TCEP), 3113–3171 (VSCG…NCSP), 3172–3231 (KTCP…SCIP), 3232–3289 (VVCG…VCRE), 3290–3347 (SRCE…LCKP), 3348–3406 (NPCP…RCEK), and 3407–3463 (ISCG…ICRA). 33 cysteine pairs are disulfide-bonded: Cys-2679–Cys-2706, Cys-2711–Cys-2751, Cys-2737–Cys-2764, Cys-2769–Cys-2809, Cys-2795–Cys-2822, Cys-2827–Cys-2867, Cys-2853–Cys-2880, Cys-2885–Cys-2925, Cys-2911–Cys-2938, Cys-2943–Cys-2983, Cys-2969–Cys-2996, Cys-3001–Cys-3040, Cys-3026–Cys-3052, Cys-3057–Cys-3097, Cys-3083–Cys-3110, Cys-3115–Cys-3156, Cys-3141–Cys-3169, Cys-3174–Cys-3214, Cys-3200–Cys-3229, Cys-3234–Cys-3274, Cys-3260–Cys-3287, Cys-3292–Cys-3332, Cys-3318–Cys-3345, Cys-3350–Cys-3391, Cys-3377–Cys-3404, Cys-3409–Cys-3449, Cys-3435–Cys-3461, Cys-3497–Cys-3507, Cys-3501–Cys-3513, Cys-3515–Cys-3524, Cys-3529–Cys-3539, Cys-3533–Cys-3545, and Cys-3547–Cys-3556. 2 EGF-like domains span residues 3493 to 3525 (EEPICILPCLNGGRCVAPYRCDCPAGWTGSRCH) and 3526 to 3557 (TATCQSPCLNGGKCVRPNRCHCLSSWTGHDCS).

In terms of assembly, interacts (via Sushi domain 21) with ITGA9:ITGB1; thereby inhibits Ca(2+) intracellular signaling and as a result represses vasocontraction. Interacts (via Sushi domain 21) with ITGA4:ITGB1; thereby inhibits Ca(2+) intracellular signaling and as a result represses vasocontraction. Interacts with ANGPT1 and ANGPT2. Interacts with PEAR1 (via extracellular domain). Interacts with HSPG2, TLN1, FN1, COPA, CCT2, IQGAP1, LAMC1 and NID1. Interacts (via C-terminus) with TIE1.

Its subcellular location is the secreted. It is found in the nucleus. The protein resides in the cytoplasm. The protein localises to the membrane. Functionally, required for morphological development, cell alignment and migration of lymphatic endothelial cells during embryonic development, potentially via modulation of ANGPT2-TIE1 signaling and subsequent activation of FOXC2 transcription. Required for embryonic lymphatic vascular development, via mediating the correct formation of the first lymphovenous contact site and tight association of the lymphatic endothelium with the venous endothelium. Represses PRKCA-mediated L-type voltage-gated channel Ca(2+) influx and ROCK-mediated calcium sensitivity in vascular smooth muscle cells, via its interaction with integrins, thereby inhibiting vasocontraction. Promotes platelet activation, via its interaction with PEAR1 and subsequent activation of AKT/mTOR signaling. Plays a role in epidermal development and keratinocyte differentiation, independent of cell-cell adhesion. May play a role in initial cell attachment of stromal osteogenic cells. May promote myoblast cell adhesion when in the presence of integrin ITGA9:ITGB1. The sequence is that of Sushi, von Willebrand factor type A, EGF and pentraxin domain-containing protein 1 (Svep1) from Rattus norvegicus (Rat).